Here is a 94-residue protein sequence, read N- to C-terminus: Small ribosomal subunit protein bS18 (94 aa).

A compositionally biased stretch (low complexity) spans 1–12 (MSEQNSRPQNSE). Positions 1–29 (MSEQNSRPQNSERPQRSRRPQGGPRRRRK) are disordered. Positions 16–29 (RSRRPQGGPRRRRK) are enriched in basic residues.

Belongs to the bacterial ribosomal protein bS18 family. Part of the 30S ribosomal subunit. Forms a tight heterodimer with protein bS6.

Its function is as follows. Binds as a heterodimer with protein bS6 to the central domain of the 16S rRNA, where it helps stabilize the platform of the 30S subunit. The chain is Small ribosomal subunit protein bS18 from Leuconostoc mesenteroides subsp. mesenteroides (strain ATCC 8293 / DSM 20343 / BCRC 11652 / CCM 1803 / JCM 6124 / NCDO 523 / NBRC 100496 / NCIMB 8023 / NCTC 12954 / NRRL B-1118 / 37Y).